Consider the following 147-residue polypeptide: Ponticulin-like protein C5 (147 aa).

Positions 1 to 20 are cleaved as a signal peptide; sequence MKLNNSLLLLIVAIIASSNA. A lipid anchor (GPI-like-anchor amidated asparagine) is attached at Asn-118. Residue Asn-118 is glycosylated (N-linked (GlcNAc...) asparagine). A propeptide spans 119–147 (removed in mature form); sequence SSESDSSDSTRIGASFALFALALLSMLAL.

The protein belongs to the ponticulin family. In terms of processing, the GPI-like-anchor contains a phosphoceramide group, rather than a phosphatidyl group.

The protein localises to the cell membrane. This is Ponticulin-like protein C5 (ponC5) from Dictyostelium discoideum (Social amoeba).